Reading from the N-terminus, the 982-residue chain is Bifunctional glutamine synthetase adenylyltransferase/adenylyl-removing enzyme (982 aa).

The adenylyl removase stretch occupies residues 1-460 (MSLPSLANLP…HFRQVIADPD (460 aa)). Residues 473–982 (GAEWIPLWEE…IRIWRELRLG (510 aa)) are adenylyl transferase.

Belongs to the GlnE family. Requires Mg(2+) as cofactor.

It catalyses the reaction [glutamine synthetase]-O(4)-(5'-adenylyl)-L-tyrosine + phosphate = [glutamine synthetase]-L-tyrosine + ADP. The enzyme catalyses [glutamine synthetase]-L-tyrosine + ATP = [glutamine synthetase]-O(4)-(5'-adenylyl)-L-tyrosine + diphosphate. In terms of biological role, involved in the regulation of glutamine synthetase GlnA, a key enzyme in the process to assimilate ammonia. When cellular nitrogen levels are high, the C-terminal adenylyl transferase (AT) inactivates GlnA by covalent transfer of an adenylyl group from ATP to specific tyrosine residue of GlnA, thus reducing its activity. Conversely, when nitrogen levels are low, the N-terminal adenylyl removase (AR) activates GlnA by removing the adenylyl group by phosphorolysis, increasing its activity. The regulatory region of GlnE binds the signal transduction protein PII (GlnB) which indicates the nitrogen status of the cell. This chain is Bifunctional glutamine synthetase adenylyltransferase/adenylyl-removing enzyme, found in Pseudomonas aeruginosa (strain ATCC 15692 / DSM 22644 / CIP 104116 / JCM 14847 / LMG 12228 / 1C / PRS 101 / PAO1).